An 84-amino-acid polypeptide reads, in one-letter code: Large ribosomal subunit protein bL27 (84 aa).

The interval 1–21 (MAHKKGGGSTKNGRDSNPKYL) is disordered.

It belongs to the bacterial ribosomal protein bL27 family.

The protein is Large ribosomal subunit protein bL27 of Chlorobium luteolum (strain DSM 273 / BCRC 81028 / 2530) (Pelodictyon luteolum).